The following is a 313-amino-acid chain: tRNA dimethylallyltransferase (313 aa).

ATP is bound at residue G9 to S16. Residue T11–S16 participates in substrate binding.

The protein belongs to the IPP transferase family. Monomer. Requires Mg(2+) as cofactor.

The enzyme catalyses adenosine(37) in tRNA + dimethylallyl diphosphate = N(6)-dimethylallyladenosine(37) in tRNA + diphosphate. In terms of biological role, catalyzes the transfer of a dimethylallyl group onto the adenine at position 37 in tRNAs that read codons beginning with uridine, leading to the formation of N6-(dimethylallyl)adenosine (i(6)A). This Mycobacteroides abscessus (strain ATCC 19977 / DSM 44196 / CCUG 20993 / CIP 104536 / JCM 13569 / NCTC 13031 / TMC 1543 / L948) (Mycobacterium abscessus) protein is tRNA dimethylallyltransferase.